Here is a 161-residue protein sequence, read N- to C-terminus: Cyclic pyranopterin monophosphate synthase (161 aa).

Substrate contacts are provided by residues 75–77 and 115–116; these read MCH and ME. Asp-130 is a catalytic residue.

This sequence belongs to the MoaC family. Homohexamer; trimer of dimers.

The enzyme catalyses (8S)-3',8-cyclo-7,8-dihydroguanosine 5'-triphosphate = cyclic pyranopterin phosphate + diphosphate. The protein operates within cofactor biosynthesis; molybdopterin biosynthesis. Catalyzes the conversion of (8S)-3',8-cyclo-7,8-dihydroguanosine 5'-triphosphate to cyclic pyranopterin monophosphate (cPMP). The chain is Cyclic pyranopterin monophosphate synthase from Bacillus cereus (strain ATCC 10987 / NRS 248).